Reading from the N-terminus, the 343-residue chain is N-acetyl-gamma-glutamyl-phosphate reductase (343 aa).

Cys-147 is an active-site residue.

The protein belongs to the NAGSA dehydrogenase family. Type 1 subfamily.

Its subcellular location is the cytoplasm. It carries out the reaction N-acetyl-L-glutamate 5-semialdehyde + phosphate + NADP(+) = N-acetyl-L-glutamyl 5-phosphate + NADPH + H(+). It functions in the pathway amino-acid biosynthesis; L-arginine biosynthesis; N(2)-acetyl-L-ornithine from L-glutamate: step 3/4. Catalyzes the NADPH-dependent reduction of N-acetyl-5-glutamyl phosphate to yield N-acetyl-L-glutamate 5-semialdehyde. The chain is N-acetyl-gamma-glutamyl-phosphate reductase from Listeria welshimeri serovar 6b (strain ATCC 35897 / DSM 20650 / CCUG 15529 / CIP 8149 / NCTC 11857 / SLCC 5334 / V8).